Here is a 120-residue protein sequence, read N- to C-terminus: Large ribosomal subunit protein bL17 (120 aa).

The protein belongs to the bacterial ribosomal protein bL17 family. In terms of assembly, part of the 50S ribosomal subunit. Contacts protein L32.

In Geobacillus sp. (strain WCH70), this protein is Large ribosomal subunit protein bL17.